Reading from the N-terminus, the 94-residue chain is Cytochrome c-551 (94 aa).

Positions 1 to 14 are cleaved as a signal peptide; that stretch reads MAFTAMTVAPSALA. C24, C27, H28, and M73 together coordinate heme c.

Post-translationally, binds 1 heme c group covalently per subunit.

In terms of biological role, efficiently couple electron transfer between the cytochrome bc1 complex and the photosynthetic reaction center. The sequence is that of Cytochrome c-551 from Allochromatium vinosum (strain ATCC 17899 / DSM 180 / NBRC 103801 / NCIMB 10441 / D) (Chromatium vinosum).